The chain runs to 198 residues: Elongation factor Ts (198 aa).

The segment at 82-85 (SDFV) is involved in Mg(2+) ion dislocation from EF-Tu.

This sequence belongs to the EF-Ts family.

Its subcellular location is the cytoplasm. Associates with the EF-Tu.GDP complex and induces the exchange of GDP to GTP. It remains bound to the aminoacyl-tRNA.EF-Tu.GTP complex up to the GTP hydrolysis stage on the ribosome. The chain is Elongation factor Ts from Desulfosudis oleivorans (strain DSM 6200 / JCM 39069 / Hxd3) (Desulfococcus oleovorans).